Reading from the N-terminus, the 677-residue chain is WD repeat-containing protein 43 (677 aa).

6 WD repeats span residues 11-51, 57-119, 124-163, 166-205, 207-259, and 267-309; these read PLAP…LHQE, HLSG…LHSK, GHDN…VKCK, GDNS…RHFT, HATP…KEKS, and TDEP…YCKK. Phosphoserine is present on Ser77. A Glycyl lysine isopeptide (Lys-Gly) (interchain with G-Cter in SUMO1); alternate cross-link involves residue Lys309. Lys309 is covalently cross-linked (Glycyl lysine isopeptide (Lys-Gly) (interchain with G-Cter in SUMO2); alternate). Phosphothreonine is present on Thr321. Lys384 participates in a covalent cross-link: Glycyl lysine isopeptide (Lys-Gly) (interchain with G-Cter in SUMO1); alternate. Lys384 participates in a covalent cross-link: Glycyl lysine isopeptide (Lys-Gly) (interchain with G-Cter in SUMO2); alternate. Thr394 is modified (phosphothreonine). Residues Ser399, Ser431, Ser437, and Ser590 each carry the phosphoserine modification. Disordered regions lie at residues 414–445 and 582–677; these read AIKP…LGAM and SEKT…SEEE. Positions 582–592 are enriched in polar residues; sequence SEKTKGATSPG. A compositionally biased stretch (acidic residues) spans 600-652; it reads EEESSEEESDDEIADKDSEDNWDEDEEESESEKDEDVEEEDEDAEGKDEENGE. Over residues 653 to 663 the composition is skewed to basic and acidic residues; the sequence is DRDTASEKELN. Thr656 is subject to Phosphothreonine. Phosphoserine is present on Ser658. A compositionally biased stretch (acidic residues) spans 664–677; it reads GDSDLDPENESEEE.

It belongs to the UTP5 family. As to quaternary structure, part of the small subunit (SSU) processome, composed of more than 70 proteins and the RNA chaperone small nucleolar RNA (snoRNA) U3. May be a component of the proposed t-UTP subcomplex of the ribosomal small subunit (SSU) processome containing at least UTP4, WDR43, HEATR1, UTP15, WDR75. Binds to RNA; binding is required for its chromatin association. Interacts with CDK9, DDX21 and SUPT6H. Interacts with RNA polymerase II. Interacts directly with UTP4 and UTP15.

Its subcellular location is the nucleus. It localises to the nucleolus. The protein localises to the nucleolus fibrillar center. The protein resides in the nucleoplasm. Its function is as follows. Ribosome biogenesis factor that coordinates hyperactive transcription and ribogenesis. Part of the small subunit (SSU) processome, first precursor of the small eukaryotic ribosomal subunit. During the assembly of the SSU processome in the nucleolus, many ribosome biogenesis factors, an RNA chaperone and ribosomal proteins associate with the nascent pre-rRNA and work in concert to generate RNA folding, modifications, rearrangements and cleavage as well as targeted degradation of pre-ribosomal RNA by the RNA exosome. Involved in nucleolar processing of pre-18S ribosomal RNA. Required for optimal pre-ribosomal RNA transcription by RNA polymerase I. Essential for stem cell pluripotency and embryonic development. In the nucleoplasm, recruited by promoter-associated/nascent transcripts and transcription to active promoters where it facilitates releases of elongation factor P-TEFb and paused RNA polymerase II to allow transcription elongation and maintain high-level expression of its targets genes. In Homo sapiens (Human), this protein is WD repeat-containing protein 43.